The sequence spans 493 residues: Ketol-acid reductoisomerase (NADP(+)) (493 aa).

The 192-residue stretch at 17-208 (LGKCRFMKRE…GGDRAGVLES (192 aa)) folds into the KARI N-terminal Rossmann domain. NADP(+) is bound by residues 45 to 48 (CGAQ), Arg-68, Arg-76, Ser-78, and 108 to 110 (DKQ). His-132 is an active-site residue. Gly-158 lines the NADP(+) pocket. KARI C-terminal knotted domains lie at 209–353 (SFIA…SEQE) and 354–486 (YYDK…MTDM). Mg(2+)-binding residues include Asp-217, Glu-221, Glu-389, and Glu-393. Residue Ser-414 coordinates substrate.

The protein belongs to the ketol-acid reductoisomerase family. It depends on Mg(2+) as a cofactor.

The enzyme catalyses (2R)-2,3-dihydroxy-3-methylbutanoate + NADP(+) = (2S)-2-acetolactate + NADPH + H(+). It carries out the reaction (2R,3R)-2,3-dihydroxy-3-methylpentanoate + NADP(+) = (S)-2-ethyl-2-hydroxy-3-oxobutanoate + NADPH + H(+). The protein operates within amino-acid biosynthesis; L-isoleucine biosynthesis; L-isoleucine from 2-oxobutanoate: step 2/4. It functions in the pathway amino-acid biosynthesis; L-valine biosynthesis; L-valine from pyruvate: step 2/4. In terms of biological role, involved in the biosynthesis of branched-chain amino acids (BCAA). Catalyzes an alkyl-migration followed by a ketol-acid reduction of (S)-2-acetolactate (S2AL) to yield (R)-2,3-dihydroxy-isovalerate. In the isomerase reaction, S2AL is rearranged via a Mg-dependent methyl migration to produce 3-hydroxy-3-methyl-2-ketobutyrate (HMKB). In the reductase reaction, this 2-ketoacid undergoes a metal-dependent reduction by NADPH to yield (R)-2,3-dihydroxy-isovalerate. In Colwellia psychrerythraea (strain 34H / ATCC BAA-681) (Vibrio psychroerythus), this protein is Ketol-acid reductoisomerase (NADP(+)).